The sequence spans 433 residues: 23S rRNA (uracil(1939)-C(5))-methyltransferase RlmD (433 aa).

The region spanning 10–68 is the TRAM domain; the sequence is RTTTRQIITVSVNDLDSFGQGVARHNGKTLFIPGLLPQENAEVTVTEDKKQYARAKVVR. The [4Fe-4S] cluster site is built by Cys81, Cys87, Cys90, and Cys162. S-adenosyl-L-methionine contacts are provided by Gln265, Phe294, Asn299, Glu315, Asn342, and Asp363. The active-site Nucleophile is the Cys389.

Belongs to the class I-like SAM-binding methyltransferase superfamily. RNA M5U methyltransferase family. RlmD subfamily.

The enzyme catalyses uridine(1939) in 23S rRNA + S-adenosyl-L-methionine = 5-methyluridine(1939) in 23S rRNA + S-adenosyl-L-homocysteine + H(+). Functionally, catalyzes the formation of 5-methyl-uridine at position 1939 (m5U1939) in 23S rRNA. In Shigella sonnei (strain Ss046), this protein is 23S rRNA (uracil(1939)-C(5))-methyltransferase RlmD.